The sequence spans 145 residues: Small ribosomal subunit protein uS12 (145 aa).

The protein belongs to the universal ribosomal protein uS12 family. In terms of assembly, component of the small ribosomal subunit. Mature ribosomes consist of a small (40S) and a large (60S) subunit. The 40S subunit contains about 32 different proteins and 1 molecule of RNA (18S). The 60S subunit contains 45 different proteins and 3 molecules of RNA (25S, 5.8S and 5S).

It localises to the cytoplasm. Component of the ribosome, a large ribonucleoprotein complex responsible for the synthesis of proteins in the cell. The small ribosomal subunit (SSU) binds messenger RNAs (mRNAs) and translates the encoded message by selecting cognate aminoacyl-transfer RNA (tRNA) molecules. The large subunit (LSU) contains the ribosomal catalytic site termed the peptidyl transferase center (PTC), which catalyzes the formation of peptide bonds, thereby polymerizing the amino acids delivered by tRNAs into a polypeptide chain. The nascent polypeptides leave the ribosome through a tunnel in the LSU and interact with protein factors that function in enzymatic processing, targeting, and the membrane insertion of nascent chains at the exit of the ribosomal tunnel. The polypeptide is Small ribosomal subunit protein uS12 (RPS23A) (Candida albicans (strain SC5314 / ATCC MYA-2876) (Yeast)).